We begin with the raw amino-acid sequence, 287 residues long: ATP synthase gamma chain (287 aa).

The protein belongs to the ATPase gamma chain family. As to quaternary structure, F-type ATPases have 2 components, CF(1) - the catalytic core - and CF(0) - the membrane proton channel. CF(1) has five subunits: alpha(3), beta(3), gamma(1), delta(1), epsilon(1). CF(0) has three main subunits: a, b and c.

Its subcellular location is the cell inner membrane. Produces ATP from ADP in the presence of a proton gradient across the membrane. The gamma chain is believed to be important in regulating ATPase activity and the flow of protons through the CF(0) complex. The polypeptide is ATP synthase gamma chain (Xylella fastidiosa (strain M12)).